The chain runs to 297 residues: Mitochondrial ornithine transporter 1 (297 aa).

Solcar repeat units follow at residues 15-97, 102-205, and 212-292; these read GSPA…LKLT, DPTL…FKKN, and KPHF…FRET. Helical transmembrane passes span 18–38, 72–91, 107–127, 184–204, 215–235, and 264–285; these read ASTF…GYPL, GLTL…FTVY, YFIS…PFEY, HLTR…TFKK, FAYA…VFPV, and IYRG…NFTL.

This sequence belongs to the mitochondrial carrier (TC 2.A.29) family.

It localises to the mitochondrion inner membrane. In terms of biological role, required for arginine biosynthesis. Transports ornithine synthesized from glutamate in the mitochondrial matrix to the cytosol, where it is converted to arginine. This Schizosaccharomyces pombe (strain 972 / ATCC 24843) (Fission yeast) protein is Mitochondrial ornithine transporter 1.